Here is a 196-residue protein sequence, read N- to C-terminus: Homeobox protein ANF-1 (196 aa).

Positions 119–178 form a DNA-binding region, homeobox; sequence GRRPRTAFTRNQIEVLENVFKMNSYPGIDIREELARKLDLEEDRIQIWFQNRRAKLKRSH.

This sequence belongs to the ANF homeobox family.

The protein resides in the nucleus. Functionally, may be involved in the early patterning of the most anterior region of the main embryonic body axis. This Gallus gallus (Chicken) protein is Homeobox protein ANF-1.